We begin with the raw amino-acid sequence, 228 residues long: NAD(P)H-hydrate epimerase (228 aa).

A YjeF N-terminal domain is found at 9–209 (VRAVERLAHR…LLGLTPAFLA (201 aa)). 53-57 (NNGGD) contributes to the (6S)-NADPHX binding site. 2 residues coordinate K(+): Asn-54 and Asp-115. (6S)-NADPHX is bound by residues 119-125 (GIGLARP) and Asp-148. Residue Ser-151 participates in K(+) binding.

It belongs to the NnrE/AIBP family. K(+) is required as a cofactor.

The catalysed reaction is (6R)-NADHX = (6S)-NADHX. It catalyses the reaction (6R)-NADPHX = (6S)-NADPHX. Its function is as follows. Catalyzes the epimerization of the S- and R-forms of NAD(P)HX, a damaged form of NAD(P)H that is a result of enzymatic or heat-dependent hydration. This is a prerequisite for the S-specific NAD(P)H-hydrate dehydratase to allow the repair of both epimers of NAD(P)HX. The polypeptide is NAD(P)H-hydrate epimerase (Bordetella bronchiseptica (strain ATCC BAA-588 / NCTC 13252 / RB50) (Alcaligenes bronchisepticus)).